A 181-amino-acid polypeptide reads, in one-letter code: Ribosome maturation factor RimM (181 aa).

In terms of domain architecture, PRC barrel spans 103–181 (EGDYYWSQLE…EMVVDWDPEF (79 aa)).

This sequence belongs to the RimM family. Binds ribosomal protein uS19.

Its subcellular location is the cytoplasm. In terms of biological role, an accessory protein needed during the final step in the assembly of 30S ribosomal subunit, possibly for assembly of the head region. Essential for efficient processing of 16S rRNA. May be needed both before and after RbfA during the maturation of 16S rRNA. It has affinity for free ribosomal 30S subunits but not for 70S ribosomes. This is Ribosome maturation factor RimM from Marinomonas sp. (strain MWYL1).